The following is a 181-amino-acid chain: Protein Syd (181 aa).

Belongs to the Syd family.

The protein localises to the cell inner membrane. Its function is as follows. Interacts with the SecY protein in vivo. May bind preferentially to an uncomplexed state of SecY, thus functioning either as a chelating agent for excess SecY in the cell or as a regulatory factor that negatively controls the translocase function. The protein is Protein Syd of Enterobacter sp. (strain 638).